A 61-amino-acid chain; its full sequence is Large ribosomal subunit protein uL30 (61 aa).

It belongs to the universal ribosomal protein uL30 family. Part of the 50S ribosomal subunit.

The sequence is that of Large ribosomal subunit protein uL30 from Bordetella parapertussis (strain 12822 / ATCC BAA-587 / NCTC 13253).